Here is a 91-residue protein sequence, read N- to C-terminus: uncharacterized protein (91 aa).

Its subcellular location is the plastid. The protein localises to the cyanelle. This is an uncharacterized protein from Cyanophora paradoxa.